Reading from the N-terminus, the 271-residue chain is 2,3,4,5-tetrahydropyridine-2,6-dicarboxylate N-succinyltransferase (271 aa).

It belongs to the transferase hexapeptide repeat family.

It localises to the cytoplasm. It catalyses the reaction (S)-2,3,4,5-tetrahydrodipicolinate + succinyl-CoA + H2O = (S)-2-succinylamino-6-oxoheptanedioate + CoA. Its pathway is amino-acid biosynthesis; L-lysine biosynthesis via DAP pathway; LL-2,6-diaminopimelate from (S)-tetrahydrodipicolinate (succinylase route): step 1/3. The chain is 2,3,4,5-tetrahydropyridine-2,6-dicarboxylate N-succinyltransferase from Coxiella burnetii (strain CbuG_Q212) (Coxiella burnetii (strain Q212)).